The sequence spans 372 residues: uncharacterized protein (372 aa).

The signal sequence occupies residues 1–19 (MKIFFLFIILLGIIQLSNS). Asparagine 18 is a glycosylation site (N-linked (GlcNAc...) asparagine). In terms of domain architecture, MRH spans 20–160 (SSCNIDIAGD…IWTTKYSCAI (141 aa)). Cysteine 22 and cysteine 58 form a disulfide bridge. The N-linked (GlcNAc...) asparagine glycan is linked to asparagine 59. A disulfide bridge links cysteine 128 with cysteine 158. Residues 185-282 (NEILNEAQSN…VQFNDDIKLI (98 aa)) are a coiled coil. The disordered stretch occupies residues 201-233 (KNEDLNNNNNNNNNNNNNNNNNNNNNNNNNKIN). Residues 206-230 (NNNNNNNNNNNNNNNNNNNNNNNNN) show a composition bias toward low complexity.

The protein localises to the secreted. This is an uncharacterized protein from Dictyostelium discoideum (Social amoeba).